Here is a 253-residue protein sequence, read N- to C-terminus: E3 ubiquitin-protein ligase MARCHF3 (253 aa).

The RING-CH-type zinc finger occupies 63-123; sequence SPFNDRPMCR…ELCHFRFAVE (61 aa). 8 residues coordinate Zn(2+): Cys-71, Cys-74, Cys-87, Cys-89, His-97, Cys-100, Cys-113, and Cys-116. The next 2 helical transmembrane spans lie at 145 to 165 and 182 to 202; these read LFGD…SGWL and AVGL…WTLV. A phosphoserine mark is found at Ser-237 and Ser-243.

As to quaternary structure, interacts with MARCHF2 and STX6.

It is found in the cytoplasmic vesicle membrane. It localises to the early endosome membrane. It catalyses the reaction S-ubiquitinyl-[E2 ubiquitin-conjugating enzyme]-L-cysteine + [acceptor protein]-L-lysine = [E2 ubiquitin-conjugating enzyme]-L-cysteine + N(6)-ubiquitinyl-[acceptor protein]-L-lysine.. It participates in protein modification; protein ubiquitination. In terms of biological role, E3 ubiquitin-protein ligase which may be involved in endosomal trafficking. E3 ubiquitin ligases accept ubiquitin from an E2 ubiquitin-conjugating enzyme in the form of a thioester and then directly transfer the ubiquitin to targeted substrates. The polypeptide is E3 ubiquitin-protein ligase MARCHF3 (Homo sapiens (Human)).